A 165-amino-acid chain; its full sequence is Lithostathine-1 (165 aa).

A signal peptide spans 1–21; it reads MARNAYFILLSCLIVLSPSQG. Q22 carries the pyrrolidone carboxylic acid modification. A C-type lectin domain is found at 33–163; the sequence is ISCPEGSNAY…DAQYSFVCKF (131 aa). Intrachain disulfides connect C35-C46, C63-C161, and C136-C153. N129 carries an N-linked (GlcNAc...) asparagine glycan.

As to expression, expressed only in regenerating islets and normal exocrine pancreas, but not in normal pancreatic islets. Expressed strongly in pancreas, moderately in gall bladder, and weakly in liver.

The protein resides in the secreted. Its function is as follows. Might act as an inhibitor of spontaneous calcium carbonate precipitation. This Mus musculus (Mouse) protein is Lithostathine-1 (Reg1).